The following is a 262-amino-acid chain: Aminoglycoside (3'') (9) adenylyltransferase (262 aa).

The enzyme catalyses streptomycin + ATP = 3''-O-adenylylstreptomycin + diphosphate. The catalysed reaction is spectinomycin + ATP = 9-O-adenylylspectinomycin + diphosphate. In terms of biological role, mediates bacterial resistance to the antibiotics streptomycin and spectinomycin. The chain is Aminoglycoside (3'') (9) adenylyltransferase from Shigella flexneri.